Consider the following 48-residue polypeptide: Small ribosomal subunit protein uS14 (48 aa).

The Zn(2+) site is built by Cys13, Cys16, Cys31, and Cys34.

This sequence belongs to the universal ribosomal protein uS14 family. Zinc-binding uS14 subfamily. As to quaternary structure, part of the 30S ribosomal subunit. Requires Zn(2+) as cofactor.

Functionally, binds 16S rRNA, required for the assembly of 30S particles. This Methanopyrus kandleri (strain AV19 / DSM 6324 / JCM 9639 / NBRC 100938) protein is Small ribosomal subunit protein uS14.